A 640-amino-acid chain; its full sequence is MARRGGAAASSSMANLLGVALVLAATAQTSARGGGGGGRHDYRMALSKSILYFEAQRSGVLPGNQRIAWRANSGLADGKANGVDLVGGYYDAGDNVKFGFPMAFTVTMMAWSVLEYGKQMAAAGELGHAMDAVRWGADYFVKAHPAPNVLYGEVGDGDSDHVCWQRPEDMTTSRQAYRLDPQHPGSDLAGETATALAAASLVFRSSNPGYANQLLQHSKQLFDFADKYRGKYDDSMPVVKKFYGSFSGYGDELLWASAWLYQATDNRRYLDYLANNGDALGGTGWATNEFGWDVKYPGVQVLAAKFLLQGKAGPHAAVLRRYQRNADVFACSCLGKGGGGGNVGRTPGGLMYHQGWNNLQFVTGASFLLAVYADHLAAAGRGQAVVRCQAGPAARASELVALAKSQVDYILGSNPRGISYMVGYGARYPRRAHHRGASIVSIRANPSFVSCKDGYASWFGRAGSNPNLLDGAVVGGPDGRDGFADERNNYQQTEVATYNNAPLMGVLARLAGGGRGGLAEAAIKRPDNQTLLPPLAAAASPVEITQLNATASWKKDGRTYRRYAATVSNRSPAGGKTVEELHIGIGKPHGPVWGLEKAARYGYVLPSSLAAGESAAFAYVVRGRAAPPPADVWVIGYKLV.

The signal sequence occupies residues 1-24 (MARRGGAAASSSMANLLGVALVLA). Asp-94 serves as the catalytic Nucleophile. Residues His-433, Asp-485, and Glu-494 contribute to the active site. Residues Asn-528 and Asn-548 are each glycosylated (N-linked (GlcNAc...) asparagine).

It belongs to the glycosyl hydrolase 9 (cellulase E) family. As to expression, expressed in roots, leaf sheaths and flowers.

Its subcellular location is the secreted. The enzyme catalyses Endohydrolysis of (1-&gt;4)-beta-D-glucosidic linkages in cellulose, lichenin and cereal beta-D-glucans.. This Oryza sativa subsp. japonica (Rice) protein is Endoglucanase 1 (GLU7).